A 444-amino-acid polypeptide reads, in one-letter code: Acyl-CoA 6-desaturase (444 aa).

Topologically, residues 1–130 (MGGGGQQTDR…EAEGCFKTQP (130 aa)) are cytoplasmic. Positions 18–95 (FSSYTWEEVQ…LKPLLIGELE (78 aa)) constitute a Cytochrome b5 heme-binding domain. A helical membrane pass occupies residues 131 to 151 (LFFALHLGHILLLEAIAFMMV). Topologically, residues 152 to 157 (WYFGTG) are lumenal. A helical transmembrane segment spans residues 158 to 178 (WINTLIVAVILATAQSQAGWL). Over 179-264 (QHDFGHLSVF…KHLPYNHQHK (86 aa)) the chain is Cytoplasmic. Residues 180-184 (HDFGH) carry the Histidine box-1 motif. The Histidine box-2 motif lies at 217-221 (HFQHH). Residues 265–285 (YFFFIGPPLLIPVYFQFQIFH) traverse the membrane as a helical segment. Residues 286 to 305 (NMISHGMWVDLLWCISYYVR) lie on the Lumenal side of the membrane. A helical transmembrane segment spans residues 306 to 326 (YFLCYTQFYGVFWAIILFNFV). At 327–444 (RFMESHWFVW…ELWLDAYLNK (118 aa)) the chain is on the cytoplasmic side. Positions 382 to 386 (QIEHH) match the Histidine box-3 motif.

It belongs to the fatty acid desaturase type 1 family.

The protein resides in the endoplasmic reticulum membrane. It catalyses the reaction (9Z,12Z)-octadecadienoyl-CoA + 2 Fe(II)-[cytochrome b5] + O2 + 2 H(+) = (6Z,9Z,12Z)-octadecatrienoyl-CoA + 2 Fe(III)-[cytochrome b5] + 2 H2O. It carries out the reaction (9Z,12Z,15Z)-octadecatrienoyl-CoA + 2 Fe(II)-[cytochrome b5] + O2 + 2 H(+) = (6Z,9Z,12Z,15Z)-octadecatetraenoyl-CoA + 2 Fe(III)-[cytochrome b5] + 2 H2O. The catalysed reaction is (8Z,11Z,14Z,17Z)-eicosatetraenoyl-CoA + 2 Fe(II)-[cytochrome b5] + O2 + 2 H(+) = (5Z,8Z,11Z,14Z,17Z)-eicosapentaenoyl-CoA + 2 Fe(III)-[cytochrome b5] + 2 H2O. The enzyme catalyses (8Z,11Z,14Z)-eicosatrienoyl-CoA + 2 Fe(II)-[cytochrome b5] + O2 + 2 H(+) = (5Z,8Z,11Z,14Z)-eicosatetraenoyl-CoA + 2 Fe(III)-[cytochrome b5] + 2 H2O. It participates in lipid metabolism; polyunsaturated fatty acid biosynthesis. Fatty acid desaturase with bifunctional delta-5 and delta-6 activities. Component of a lipid metabolic pathway that catalyzes the biosynthesis of polyunsaturated fatty acids (PUFA) with preference toward n-3 substrates and Delta-6 function. The protein is Acyl-CoA 6-desaturase (fads2) of Danio rerio (Zebrafish).